Consider the following 527-residue polypeptide: Thymidine kinase (527 aa).

Residues 1–57 (MTGRGQPPKKNDTYDYPRKQPPKNGSYDNYDYPTSTKTRSTNKQRKDSNYPPRETIF) form a disordered region. Basic and acidic residues predominate over residues 9–18 (KKNDTYDYPR). The segment covering 32 to 41 (YPTSTKTRST) has biased composition (polar residues). Position 216–223 (216–223 (GSIGVGKT)) interacts with ATP. The Proton acceptor role is filled by Glu243. Residues Tyr260 and Gln281 each contribute to the substrate site. Arg368 contacts ATP. Arg374 contributes to the substrate binding site.

Belongs to the herpesviridae thymidine kinase family. As to quaternary structure, homodimer.

The enzyme catalyses thymidine + ATP = dTMP + ADP + H(+). Catalyzes the transfer of the gamma-phospho group of ATP to thymidine to generate dTMP in the salvage pathway of pyrimidine synthesis. The dTMP serves as a substrate for DNA polymerase during viral DNA replication. Allows the virus to be reactivated and to grow in non-proliferative cells lacking a high concentration of phosphorylated nucleic acid precursors. This is Thymidine kinase from Saimiriine herpesvirus 2 (strain 11) (SaHV-2).